We begin with the raw amino-acid sequence, 147 residues long: Sec-independent protein translocase protein TatB (147 aa).

Residues 1–21 (MFDIGFWELVVIGVVALVVLG) form a helical membrane-spanning segment. The interval 114-147 (EPVAPISVATPDEEPTVIPAARAQPSAEQGEVKP) is disordered.

This sequence belongs to the TatB family. As to quaternary structure, the Tat system comprises two distinct complexes: a TatABC complex, containing multiple copies of TatA, TatB and TatC subunits, and a separate TatA complex, containing only TatA subunits. Substrates initially bind to the TatABC complex, which probably triggers association of the separate TatA complex to form the active translocon.

It is found in the cell inner membrane. Part of the twin-arginine translocation (Tat) system that transports large folded proteins containing a characteristic twin-arginine motif in their signal peptide across membranes. Together with TatC, TatB is part of a receptor directly interacting with Tat signal peptides. TatB may form an oligomeric binding site that transiently accommodates folded Tat precursor proteins before their translocation. In Aeromonas hydrophila subsp. hydrophila (strain ATCC 7966 / DSM 30187 / BCRC 13018 / CCUG 14551 / JCM 1027 / KCTC 2358 / NCIMB 9240 / NCTC 8049), this protein is Sec-independent protein translocase protein TatB.